The chain runs to 373 residues: MSKRDYYEVLGVHRNASETEIKKAYRKLAIKYHPDKNAGDKAAEDKFKEISEAYSILSDTQQRVIYDQYGHAGLNGGGGGGGSYSSGGFGGTPFEDLFGDIFGDIFGGRGSQRSRGRRGDDLRYNLSINFEEAAFGLETKIQIPRHQTCGTCDGIGAKPGTTPRVCPTCQGAGQVRVQQGYFSLTRPCPECNGEGQIIDQPCEECHGSGRVRGKRTLSLKIPAGVETGSRLKLSSEGEPGLNGGPPGDLYVVISVQDHPLFQRDGQHVICEIPISFPQAALGCELEVPTLTEKVNVKVTPGTQSGKVIKLQGQGFPSLQGYARGDQLVVLRVEVPTSLTDRQKELLEEFAKEGGEEIHPMGKTFFDKVKELFG.

A J domain is found at 5 to 70 (DYYEVLGVHR…QQRVIYDQYG (66 aa)). Residues 136–214 (GLETKIQIPR…CHGSGRVRGK (79 aa)) form a CR-type zinc finger. Residues Cys149, Cys152, Cys166, Cys169, Cys188, Cys191, Cys202, and Cys205 each contribute to the Zn(2+) site. 4 CXXCXGXG motif repeats span residues 149 to 156 (CGTCDGIG), 166 to 173 (CPTCQGAG), 188 to 195 (CPECNGEG), and 202 to 209 (CEECHGSG).

This sequence belongs to the DnaJ family. In terms of assembly, homodimer. Zn(2+) serves as cofactor.

It is found in the cytoplasm. Functionally, participates actively in the response to hyperosmotic and heat shock by preventing the aggregation of stress-denatured proteins and by disaggregating proteins, also in an autonomous, DnaK-independent fashion. Unfolded proteins bind initially to DnaJ; upon interaction with the DnaJ-bound protein, DnaK hydrolyzes its bound ATP, resulting in the formation of a stable complex. GrpE releases ADP from DnaK; ATP binding to DnaK triggers the release of the substrate protein, thus completing the reaction cycle. Several rounds of ATP-dependent interactions between DnaJ, DnaK and GrpE are required for fully efficient folding. Also involved, together with DnaK and GrpE, in the DNA replication of plasmids through activation of initiation proteins. This Syntrophotalea carbinolica (strain DSM 2380 / NBRC 103641 / GraBd1) (Pelobacter carbinolicus) protein is Chaperone protein DnaJ.